Here is a 680-residue protein sequence, read N- to C-terminus: DNA-directed RNA polymerase subunit beta' (680 aa).

Positions 69, 71, 87, and 90 each coordinate Zn(2+). Mg(2+) is bound by residues Asp489, Asp491, and Asp493.

Belongs to the RNA polymerase beta' chain family. RpoC1 subfamily. As to quaternary structure, in plastids the minimal PEP RNA polymerase catalytic core is composed of four subunits: alpha, beta, beta', and beta''. When a (nuclear-encoded) sigma factor is associated with the core the holoenzyme is formed, which can initiate transcription. Mg(2+) is required as a cofactor. Zn(2+) serves as cofactor.

The protein localises to the plastid. It localises to the chloroplast. The enzyme catalyses RNA(n) + a ribonucleoside 5'-triphosphate = RNA(n+1) + diphosphate. Functionally, DNA-dependent RNA polymerase catalyzes the transcription of DNA into RNA using the four ribonucleoside triphosphates as substrates. The sequence is that of DNA-directed RNA polymerase subunit beta' from Manihot esculenta (Cassava).